The chain runs to 426 residues: 3-phosphoshikimate 1-carboxyvinyltransferase (426 aa).

3-phosphoshikimate is bound by residues lysine 22, serine 23, and arginine 27. Lysine 22 contributes to the phosphoenolpyruvate binding site. Residues glycine 96 and arginine 124 each contribute to the phosphoenolpyruvate site. Residues serine 170, serine 171, glutamine 172, serine 198, aspartate 314, asparagine 337, and lysine 341 each contribute to the 3-phosphoshikimate site. Glutamine 172 contributes to the phosphoenolpyruvate binding site. The active-site Proton acceptor is aspartate 314. Phosphoenolpyruvate-binding residues include arginine 345, arginine 387, and lysine 412.

This sequence belongs to the EPSP synthase family. Monomer.

It localises to the cytoplasm. It carries out the reaction 3-phosphoshikimate + phosphoenolpyruvate = 5-O-(1-carboxyvinyl)-3-phosphoshikimate + phosphate. It functions in the pathway metabolic intermediate biosynthesis; chorismate biosynthesis; chorismate from D-erythrose 4-phosphate and phosphoenolpyruvate: step 6/7. Its function is as follows. Catalyzes the transfer of the enolpyruvyl moiety of phosphoenolpyruvate (PEP) to the 5-hydroxyl of shikimate-3-phosphate (S3P) to produce enolpyruvyl shikimate-3-phosphate and inorganic phosphate. In Shewanella sp. (strain W3-18-1), this protein is 3-phosphoshikimate 1-carboxyvinyltransferase.